Here is a 258-residue protein sequence, read N- to C-terminus: Archaerhodopsin-3 (258 aa).

Residues 1-6 (MDPIAL) constitute a propeptide that is removed on maturation. Gln7 carries the post-translational modification Pyrrolidone carboxylic acid. Residues 7–18 (QAGYDLLGDGRP) lie on the Extracellular side of the membrane. A helical membrane pass occupies residues 19-40 (ETLWLGIGTLLMLIGTFYFLVR). Residues 41-49 (GWGVTDKDA) lie on the Cytoplasmic side of the membrane. A helical transmembrane segment spans residues 50-71 (REYYAVTILVPGIASAAYLSMF). At 72-89 (FGIGLTEVTVGGEMLDIY) the chain is on the extracellular side. Residues 90 to 111 (YARYADWLFTTPLLLLDLALLA) form a helical membrane-spanning segment. Over 112–114 (KVD) the chain is Cytoplasmic. Residues 115–137 (RVTIGTLVGVDALMIVTGLIGAL) form a helical membrane-spanning segment. The Extracellular segment spans residues 138-141 (SHTA). The chain crosses the membrane as a helical span at residues 142 to 170 (IARYSWWLFSTICMIVVLYFLATSLRSAA). At 171–173 (KER) the chain is on the cytoplasmic side. Residues 174–202 (GPEVASTFNTLTALVLVLWTAYPILWIIG) form a helical membrane-spanning segment. Over 203 to 210 (TEGAGVVG) the chain is Extracellular. A helical transmembrane segment spans residues 211-243 (LGIETLLFMVLDVTAKVGFGFILLRSRAILGDT). At Lys226 the chain carries N6-(retinylidene)lysine. Residues 244 to 258 (EAPEPSAGADVSAAD) lie on the Cytoplasmic side of the membrane.

This sequence belongs to the archaeal/bacterial/fungal opsin family.

The protein resides in the cell membrane. In terms of biological role, light-driven proton pump. This is Archaerhodopsin-3 (aop3) from Halorubrum sodomense.